The primary structure comprises 134 residues: Replication enhancer protein (134 aa).

This sequence belongs to the geminiviridae replication enhancer protein family. As to quaternary structure, homooligomer. Interacts with the replication-associated protein (REP). Interacts with host proliferating cell nuclear antigen (PCNA). Interacts with host retinoblastoma-related protein 1 (RBR1), and may thereby deregulate the host cell cycle. Oligomerization and interaction with PCNA are necessary for optimal replication enhancement.

Its function is as follows. Increases viral DNA accumulation. Enhances infectivity and symptom expression. This is Replication enhancer protein from Mungbean yellow mosaic virus (strain Vigna) (MYMV).